The primary structure comprises 375 residues: Erythronate-4-phosphate dehydrogenase (375 aa).

Substrate is bound by residues S45 and T66. Residues D146 and T175 each coordinate NAD(+). The active site involves R208. D232 contacts NAD(+). E237 is an active-site residue. The Proton donor role is filled by H254. G257 contributes to the NAD(+) binding site. Position 258 (Y258) interacts with substrate.

This sequence belongs to the D-isomer specific 2-hydroxyacid dehydrogenase family. PdxB subfamily. In terms of assembly, homodimer.

It is found in the cytoplasm. The enzyme catalyses 4-phospho-D-erythronate + NAD(+) = (R)-3-hydroxy-2-oxo-4-phosphooxybutanoate + NADH + H(+). It participates in cofactor biosynthesis; pyridoxine 5'-phosphate biosynthesis; pyridoxine 5'-phosphate from D-erythrose 4-phosphate: step 2/5. Functionally, catalyzes the oxidation of erythronate-4-phosphate to 3-hydroxy-2-oxo-4-phosphonooxybutanoate. The chain is Erythronate-4-phosphate dehydrogenase from Edwardsiella ictaluri (strain 93-146).